Reading from the N-terminus, the 168-residue chain is Thermonuclease (168 aa).

The N-terminal stretch at 1-27 (MKKITTGVLILAIAIVVLIFQYINGDG) is a signal peptide. Active-site residues include Arg-64, Glu-72, and Arg-114.

This sequence belongs to the thermonuclease family. Ca(2+) serves as cofactor.

The protein localises to the secreted. The catalysed reaction is Endonucleolytic cleavage to nucleoside 3'-phosphates and 3'-phosphooligonucleotide end-products.. In terms of biological role, enzyme that catalyzes the hydrolysis of both DNA and RNA at the 5'-position of the phosphodiester bond. This is Thermonuclease (nucI) from Staphylococcus intermedius.